A 108-amino-acid chain; its full sequence is Zinc finger protein 475 (108 aa).

C2HC/C3H-type zinc fingers lie at residues 6 to 35 (PAVV…KWHN) and 79 to 108 (QLVP…KAAK). Positions 10, 13, 25, 29, 83, 86, 98, and 102 each coordinate Zn(2+).

Zn(2+) is required as a cofactor.

This chain is Zinc finger protein 475, found in Homo sapiens (Human).